The primary structure comprises 224 residues: Phosphoribosylformylglycinamidine synthase subunit PurQ (224 aa).

The 223-residue stretch at 2–224 (TVAIIRFGGS…DGQGVLEGFR (223 aa)) folds into the Glutamine amidotransferase type-1 domain. Catalysis depends on Cys85, which acts as the Nucleophile. Residues His202 and Glu204 contribute to the active site. A disordered region spans residues 204-224 (ERASLPDIGPTDGQGVLEGFR).

Part of the FGAM synthase complex composed of 1 PurL, 1 PurQ and 2 PurS subunits.

It is found in the cytoplasm. The enzyme catalyses N(2)-formyl-N(1)-(5-phospho-beta-D-ribosyl)glycinamide + L-glutamine + ATP + H2O = 2-formamido-N(1)-(5-O-phospho-beta-D-ribosyl)acetamidine + L-glutamate + ADP + phosphate + H(+). It carries out the reaction L-glutamine + H2O = L-glutamate + NH4(+). It participates in purine metabolism; IMP biosynthesis via de novo pathway; 5-amino-1-(5-phospho-D-ribosyl)imidazole from N(2)-formyl-N(1)-(5-phospho-D-ribosyl)glycinamide: step 1/2. In terms of biological role, part of the phosphoribosylformylglycinamidine synthase complex involved in the purines biosynthetic pathway. Catalyzes the ATP-dependent conversion of formylglycinamide ribonucleotide (FGAR) and glutamine to yield formylglycinamidine ribonucleotide (FGAM) and glutamate. The FGAM synthase complex is composed of three subunits. PurQ produces an ammonia molecule by converting glutamine to glutamate. PurL transfers the ammonia molecule to FGAR to form FGAM in an ATP-dependent manner. PurS interacts with PurQ and PurL and is thought to assist in the transfer of the ammonia molecule from PurQ to PurL. The polypeptide is Phosphoribosylformylglycinamidine synthase subunit PurQ (Natronomonas pharaonis (strain ATCC 35678 / DSM 2160 / CIP 103997 / JCM 8858 / NBRC 14720 / NCIMB 2260 / Gabara) (Halobacterium pharaonis)).